The primary structure comprises 218 residues: Glutathione S-transferase (218 aa).

The GST N-terminal domain occupies 3 to 88 (SKPVLGYWDI…YIGRKYKLTG (86 aa)). Glutathione-binding positions include 9 to 10 (YW), 43 to 46 (RSAW), Lys50, 59 to 60 (NL), and 72 to 73 (QT). In terms of domain architecture, GST C-terminal spans 90–206 (NEPEELRVSL…YIKAQQPKLF (117 aa)). Tyr116 lines the substrate pocket.

The protein belongs to the GST superfamily. Mu family.

It catalyses the reaction RX + glutathione = an S-substituted glutathione + a halide anion + H(+). Functionally, conjugation of reduced glutathione to a wide number of exogenous and endogenous hydrophobic electrophiles. The chain is Glutathione S-transferase from Tyrophagus putrescentiae (Mold mite).